The primary structure comprises 92 residues: Ig kappa chain V region 3381 (92 aa).

Residues 1–23 (AFELTQTPASVEAAVGGTVTINC) are framework-1. The complementarity-determining-1 stretch occupies residues 24-34 (QASESISNWLA). A framework-2 region spans residues 35–49 (WYQQKPGQPXKLLIY). The complementarity-determining-2 stretch occupies residues 50 to 56 (KASTLAS). Positions 57-88 (GVSSRFKGSGSGTQFTLTISDLECADAATYYC) are framework-3. Residues 89–92 (QSTD) form a complementarity-determining-3 region.

The polypeptide is Ig kappa chain V region 3381 (Oryctolagus cuniculus (Rabbit)).